Here is a 76-residue protein sequence, read N- to C-terminus: High-potential iron-sulfur protein isozyme 2 (76 aa).

[4Fe-4S] cluster contacts are provided by Cys-38, Cys-41, Cys-54, and Cys-70.

The protein belongs to the high-potential iron-sulfur protein (HiPIP) family. Homodimer.

Its function is as follows. Specific class of high-redox-potential 4Fe-4S ferredoxins. Functions in anaerobic electron transport in most purple and in some other photosynthetic bacteria and in at least one genus (Paracoccus) of halophilic, denitrifying bacteria. This Halorhodospira halophila (Ectothiorhodospira halophila) protein is High-potential iron-sulfur protein isozyme 2 (hip2).